A 162-amino-acid polypeptide reads, in one-letter code: Troponin C, skeletal muscle (162 aa).

EF-hand domains follow at residues 17-52 (EMIAEFKAAFDMFDADGGGDISTKELGTVMRMLGQN), 53-88 (PTKEELDAIIEEVDEDGSGTIDFEEFLVMMVRQMKE), 93-128 (KSEEELANCFRIFDKNADGFIDIEELGEILRATGEH), and 129-162 (VTEEEIEDLMKDSDKNNDGRIDFDEFLKMMEGVQ). Ca(2+) contacts are provided by Asp-30, Asp-32, Asp-36, Glu-41, Asp-66, Asp-68, Ser-70, Thr-72, Glu-77, Asp-106, Asn-108, Asp-110, Glu-117, Asp-142, Asn-144, Asp-146, Arg-148, and Glu-153.

The protein belongs to the troponin C family.

In terms of biological role, troponin is the central regulatory protein of striated muscle contraction. Tn consists of three components: Tn-I which is the inhibitor of actomyosin ATPase, Tn-T which contains the binding site for tropomyosin and Tn-C. The binding of calcium to Tn-C abolishes the inhibitory action of Tn on actin filaments. This is Troponin C, skeletal muscle (TNNC2) from Meleagris gallopavo (Wild turkey).